The sequence spans 129 residues: Glycine cleavage system H protein (129 aa).

The Lipoyl-binding domain occupies 24–106 (SVVVGVTQHA…YGAGWIVEIE (83 aa)). Lys-65 carries the N6-lipoyllysine modification.

The protein belongs to the GcvH family. In terms of assembly, the glycine cleavage system is composed of four proteins: P, T, L and H. The cofactor is (R)-lipoate.

Functionally, the glycine cleavage system catalyzes the degradation of glycine. The H protein shuttles the methylamine group of glycine from the P protein to the T protein. In Myxococcus xanthus (strain DK1622), this protein is Glycine cleavage system H protein.